The chain runs to 984 residues: MPKKIKPNDLADLDQGTILKFLVESIYDTGDDETEKLPGLVHPEFKDRESREKYKNLYYLHGSKIKVDFHNMVDAKIWVRKILDEARVNYTTVGYNRIENSYPTRILVDMDWVKNFNLTNQDAMQLLMKCGVPNYEQREWAVIWGLVELFFRKHAYPFYITPLNGRLKVGMNHILEKVFNPDALTTQLLYVEFFRCLERGDLLERIQEKMVCKRNALGGIIADRGELLDFEDYEEGDPMDPTIISGVKKMKMDRFVSIMKGDRSTNNMEGGKLSAVLVARLLNGKNVEGQTDVEYASVEALRLYKEYGLSNQTLLTNIIKHMVPLVAGMKDLLKEVDDPSIINIDEKTKRIWVGDRYMFKSGEMVLISYDKSKGIAKDARLRYTNLQTIKKTDPFYITFYKPKEPRLGYDIDFVKFWALDAGYKDNMGMFLYDLVKDKIDADTKKLLAHFKFDPEIYIDDTYFEETYDYDENKIYMDRLIPYLRDIMMEFYMNDEEDPNNIRIEGIIYKWYNGKLIPVTSATEEISGRPIVEAINKYLPKLMTPMIKIQCKEFLEITSDPVILSELDRIRNLLFSNVNETVVSLKTLRDNITNVEIYQNSKDFFFKAFFADKIFDQENMNDFYNAAEFAVPISSIEEVFKKPYTSKKFFFYQNGEEGSLWDGSTFFQGKVLKMDFTVNEFLTKILFETALEPPNDIDMAALPIELIIPILKLRKDGQYLLDNWYYLFTAFPFARSETMIFFPPAQKMLKADWAMNIISERPSAIPPPKFINSNDVYEYNMENKGTIYFKSDTKTIVLYHKNSGLMTEDDLYVLLHTMDLLSIEFTPINVQSTNRPEDIYIMFVSPRISGASSRGVKLYNNYEDMIKTEYSMSPDNFLFPVFENYGDGSERSGGQRNLLKSKPRIRSVLHELNNYTRSIYYVDNVKRAITAALKISALKGYIHKKTNRSLLNGSNLVPIGGQDVNDLTPLWLEIENYESIKTRYQ.

This is an uncharacterized protein from Ostreid herpesvirus 1 (isolate France) (OsHV-1).